The sequence spans 122 residues: MKIEASALRQLGIKQIEERAAEIKAELAALRQKKNSGDVGANDIKTAKKNLARALTVRREKILEELVEAYRGTPVSKLPKELRPKLNRSKRRALTKTQLRRKTRRQRARMSKFPRVIFAYNE.

Positions 10-69 (QLGIKQIEERAAEIKAELAALRQKKNSGDVGANDIKTAKKNLARALTVRREKILEELVEA) form a coiled coil.

The protein belongs to the universal ribosomal protein uL29 family. Component of the large ribosomal subunit.

It is found in the cytoplasm. The sequence is that of Large ribosomal subunit protein uL29B (RPL35C) from Encephalitozoon cuniculi (strain GB-M1) (Microsporidian parasite).